Reading from the N-terminus, the 339-residue chain is DNA-directed RNA polymerase subunit alpha (339 aa).

The interval 1–235 (MVIQKNWQEL…DQLQVFVNFE (235 aa)) is alpha N-terminal domain (alpha-NTD). The tract at residues 251–339 (FNPALLKKVD…DLAKRFEEHY (89 aa)) is alpha C-terminal domain (alpha-CTD).

It belongs to the RNA polymerase alpha chain family. Homodimer. The RNAP catalytic core consists of 2 alpha, 1 beta, 1 beta' and 1 omega subunit. When a sigma factor is associated with the core the holoenzyme is formed, which can initiate transcription.

The enzyme catalyses RNA(n) + a ribonucleoside 5'-triphosphate = RNA(n+1) + diphosphate. DNA-dependent RNA polymerase catalyzes the transcription of DNA into RNA using the four ribonucleoside triphosphates as substrates. The chain is DNA-directed RNA polymerase subunit alpha from Methylorubrum populi (strain ATCC BAA-705 / NCIMB 13946 / BJ001) (Methylobacterium populi).